We begin with the raw amino-acid sequence, 91 residues long: Small nuclear ribonucleoprotein F (91 aa).

One can recognise a Sm domain in the interval Ala8–Glu81.

The protein belongs to the snRNP Sm proteins family. SmF/LSm6 subfamily. In terms of assembly, core component of the spliceosomal U1, U2, U4 and U5 small nuclear ribonucleoproteins (snRNPs), the building blocks of the spliceosome. Most spliceosomal snRNPs contain a common set of Sm proteins, SNRPB, SNRPD1, SNRPD2, SNRPD3, SNRPE, SNRPF and SNRPG that assemble in a heptameric protein ring on the Sm site of the small nuclear RNA to form the core snRNP. Component of the U1 snRNP. Component of the U4/U6-U5 tri-snRNP complex. Component of the U7 snRNP complex. Component of the U11/U12 snRNPs that are part of the U12-type spliceosome. Part of the SMN-Sm complex that catalyzes core snRNPs assembly.

Its subcellular location is the cytoplasm. It localises to the cytosol. The protein localises to the nucleus. In terms of biological role, plays a role in pre-mRNA splicing as a core component of the spliceosomal U1, U2, U4 and U5 small nuclear ribonucleoproteins (snRNPs), the building blocks of the spliceosome. Component of both the pre-catalytic spliceosome B complex and activated spliceosome C complexes. Is also a component of the minor U12 spliceosome. The sequence is that of Small nuclear ribonucleoprotein F (snrpf) from Dictyostelium discoideum (Social amoeba).